The sequence spans 185 residues: AP-3 complex subunit sigma (185 aa).

It belongs to the adaptor complexes small subunit family. Adaptor protein complex 3 (AP-3) is a heterotetramer composed of 2 large adaptins (APL5 and APL6), a medium adaptin (APM3) and a small adaptin (APS3).

Its subcellular location is the golgi apparatus. It is found in the cytoplasmic vesicle membrane. Its function is as follows. Part of the AP-3 complex, an adaptor-related complex which is not clathrin-associated. The complex is associated with the Golgi region as well as more peripheral structures. It facilitates the budding of vesicles from the Golgi membrane and may be directly involved in trafficking to the vacuole. The polypeptide is AP-3 complex subunit sigma (APS3) (Eremothecium gossypii (strain ATCC 10895 / CBS 109.51 / FGSC 9923 / NRRL Y-1056) (Yeast)).